A 114-amino-acid polypeptide reads, in one-letter code: UPF0342 protein LSEI_1724 (114 aa).

Belongs to the UPF0342 family.

The polypeptide is UPF0342 protein LSEI_1724 (Lacticaseibacillus paracasei (strain ATCC 334 / BCRC 17002 / CCUG 31169 / CIP 107868 / KCTC 3260 / NRRL B-441) (Lactobacillus paracasei)).